A 468-amino-acid chain; its full sequence is FAD-linked oxidoreductase hasG (468 aa).

Residues Leu37 to Trp211 enclose the FAD-binding PCMH-type domain.

This sequence belongs to the oxygen-dependent FAD-linked oxidoreductase family. FAD serves as cofactor.

It functions in the pathway secondary metabolite biosynthesis. Its function is as follows. FAD-linked oxidoreductase; part of the gene cluster that mediates the biosynthesis of hexadehydro-astechrome (HAS), a tryptophan-derived iron(III)-complex that acts as a virulence factor in infected mice. Within the pathway, hasG converts the prenyl to a methylbutadienyl side chain. The HAS biosynthesis begins with the synthesis of a tethered Trp-Ala dipeptide by the NRPS hasD. The 7-dimethylallyltryptophan synthase hasE then catalyzes the prenylation of the hasD-tethered tryptophan or the resulting tethered Trp-Ala dipeptide at the C-7 position of the indole moiety. HAS biosynthesis continues via tethered intermediates with the succesive actions of the cytochrome P450 monooxygenase hasH, the O-methyltransferase hasC, and the FAD-linked oxidoreductase hasG. The resulting O-methylated diketopiperazine is then released from hasD. Finally, three O-methylated diketopiperazine molecules assemble in a trimeric complex with Fe(III) to produce hexadehydro-astechrome. This chain is FAD-linked oxidoreductase hasG, found in Aspergillus fumigatus (strain CBS 144.89 / FGSC A1163 / CEA10) (Neosartorya fumigata).